The sequence spans 607 residues: MKKEEKIFKAETKELLNLMIHSIYTNKEIFLRELISNANDAIDKLKFQSLTDTDILKDNDKFRIDISVDKDNRTLTISDNGIGMTYEEVDDNIGTIAKSGSKLFKEQLEEAKKGDIDIIGQFGVGFYSGFIVADKITLETKSPYSENGVKWISSGDGNYEIEEIAKQDRGTKITLHLKDGDEYNEFLEDWKIKDLVKKYSNYIRYEIYFGDEVINSTKPIWKKDKKELKDDDYNEFYKATFHDWNDPLLHINLKVQGNIEYNALLFIPKKLPFDYYTKNFKRGLQLYTKNVFIMEKCEDLIPEYFNFISGLVDCDSLSLNISREILQQNAELQVISKNLEKKITSELEKILKNDREKYVEFWKEFGRSIKAGVQDMFGMNKEKLQDLLIFVSSHDDKYTTLKEYVDRMGDNKEILYVPAESVDAAKYLPKMEKLKEQGREVLILTDKIDEFTLMAMRDYSGKEFKSINSSDFKFSDDKEKEEEVKKIADENKELIEKAKEFLKDKVSEVELSNNIGNSASSLLAKGGLSLEMEKTLSEMTNNNDMPKAEKVLAINPEHVLFNRLKSSVNTEDFNKLVDVLYNQALLLEGFNIENPAEFIKNLNSLIK.

The a; substrate-binding stretch occupies residues M1–R323. The interval E324–K534 is b. Residues T535 to K607 are c.

This sequence belongs to the heat shock protein 90 family. In terms of assembly, homodimer.

The protein localises to the cytoplasm. Its function is as follows. Molecular chaperone. Has ATPase activity. In Fusobacterium nucleatum subsp. nucleatum (strain ATCC 25586 / DSM 15643 / BCRC 10681 / CIP 101130 / JCM 8532 / KCTC 2640 / LMG 13131 / VPI 4355), this protein is Chaperone protein HtpG.